The chain runs to 364 residues: MTKMNRKFSKLLKNPHIFFRDFLNKKYPIKNTELPFSESEEANLIEANQKLDKIIQKNTLQQTNIDVVFTWVDGSDPSWQAKYSQYAPNYQAKSALYATDIARFEDHNELYYSVHAVLKYMPWVRHIFIITDNQKPKWLDETRQEKITLIDHQDIIDKEYLPTFNSHVIEAFLHKIPNLSENFIYFNDDVFIARELQAEHFFQANGIASIFMSEKSLTQMRNRGTITPTLSASEYSIRLLNKYYNTNIDSPLVHTYIPLKKSMYELAWRRYEKEILGFLPNKFRTNNDLNFANFLIPWLMYFEGKAMPKIDICYYFNIRSPNALTQYKKLLNKKNIGEQLIHFAQMILIVKKVLTTIKINCFLF.

It belongs to the stealth family.

Its function is as follows. Part of a capsular polysaccharide synthesis locus. This chain is Capsular polysaccharide phosphotransferase cps1A (cps1A), found in Actinobacillus pleuropneumoniae (Haemophilus pleuropneumoniae).